The chain runs to 473 residues: MDSVYKTDENFAADVAALLAPLPTPQLQEYFNKLITSRRCNGIEVKNNGTIGKGVYANSEFDEDELILKDEILVGIQHSSNKVDCLVCSFCFRFIGSIEKQIGRKLYFKNLGVSGCCDDDSSEEDECVKYNGNEEQCGGSSSSHNTLPEGVVSSLMNGEMALPHTDKFPLPSPLSCPGGCQEAFYCSESCAAADWESSHSLLCTGERSESISREALGEFIKHANDTNDIFLLAAKAIAFTILRYRKLKAEHVDKKAKQSEPKQSLLLEAWKPVSIGYKRRWWDCIALPDDVDPTDEGAFRMQIKNLACTSLELLKIAIFDKECEALFSLEIYGNIIGMFELNNLDLVVASPVEDYFLYIDDLPDAEKEETEEITRPFLDALGDEYSDCCQGTAFFPLQSCMNHSCCPNAKAFKREEDRDGQAVIIALRRISKNEEVTISYIDEELPYKERQALLADYGFSCKCSKCLEDSSSI.

The SET domain maps to 33–441 (KLITSRRCNG…KNEEVTISYI (409 aa)). The MYND-type; degenerate zinc finger occupies 134–203 (EEQCGGSSSS…DWESSHSLLC (70 aa)). Zn(2+) is bound by residues Cys176, Cys180, His199, and Cys203. Tyr440 provides a ligand contact to S-adenosyl-L-methionine.

This sequence belongs to the class V-like SAM-binding methyltransferase superfamily. Histone-lysine methyltransferase family. TRX/MLL subfamily. Interacts with JMJ30. Binds to ARF7 and ARF19 in the nucleus.

It localises to the nucleus. The enzyme catalyses L-lysyl-[histone] + S-adenosyl-L-methionine = N(6)-methyl-L-lysyl-[histone] + S-adenosyl-L-homocysteine + H(+). Functionally, histone methyltransferase that methylates 'Lys-36' (H3K36me) of histone H3 to produce H3K36me3. Promotes early stages of cellular dedifferentiation through H3K36me3-dependent, and to a lesser degree H3K4me3-dependent, activation of Lateral organ Boundaries-Domain (LBD) (e.g. LBD16 and LBD29) genes. Positive regulator of root organogenesis including lateral root formation as well as adventitious root formation from wounded leaf tissues. Recruited by JMJ30/ARF (e.g. ARF7 and ARF19) complexes to promote the deposition of H3K36me3 and, to a lower extent, H3K4me3 at LBD genes promoters, thus ensuring their stable activation during callus formation on callus-inducing medium (CIM). The sequence is that of Histone-lysine N-methyltransferase ATXR2 from Arabidopsis thaliana (Mouse-ear cress).